Consider the following 393-residue polypeptide: Serine/threonine-protein kinase US3 homolog (393 aa).

Positions 93-378 (FVILKTFTPG…AEVLLNHSVF (286 aa)) constitute a Protein kinase domain. Residues 99–107 (FTPGAEGFA) and Lys122 contribute to the ATP site. Residue Asp206 is the Proton acceptor of the active site.

The protein belongs to the protein kinase superfamily. Ser/Thr protein kinase family. In terms of processing, phosphorylated by ORF47; this phosphorylation regulates subsequent phosphorylation of proteins 24 and 27 by ORF66. Autophosphorylated.

It is found in the host cytoplasm. The protein resides in the host nucleus. The catalysed reaction is L-seryl-[protein] + ATP = O-phospho-L-seryl-[protein] + ADP + H(+). The enzyme catalyses L-threonyl-[protein] + ATP = O-phospho-L-threonyl-[protein] + ADP + H(+). Functionally, multifunctional serine/threonine kinase that plays a role in several processes including egress of virus particles from the nucleus, modulation of the actin cytoskeleton and inhibition of apoptosis. Phosphorylates proteins 24 and 27, two critical regulators of capsid budding from nucleus to endoplasmic reticulum, thereby facilitating virion egress. Modulates and redistributes host components of the nuclear envelope, including LMNA, emerin/EMD and the nuclear matrix protein MATR3. Phosphorylates envelope glycoprotein B (gB), probably to direct it to the cell surface. Promotes virus intracellular spread by restructuring host cell cytoskeleton. Blocks host apoptosis to extend cell survival and allow efficient viral replication. Promotes viral gene expression by phosphorylating host HDAC2 to reduce viral genome silencing. Down-regulates class I major histocompatibility complex (MHC-I) surface expression. Additionally, phosphorylates IE62 and targets it to the cytoplasm. The nuclear exclusion of IE62 enables the packaging of abundant levels of IE62 into virions. This is Serine/threonine-protein kinase US3 homolog (66) from Varicella-zoster virus (strain Dumas) (HHV-3).